Reading from the N-terminus, the 508-residue chain is Methionine--tRNA ligase (508 aa).

Residues 12 to 22 (YYVNDVAHIGH) carry the 'HIGH' region motif. The 'KMSKS' region signature appears at 295–299 (KISKS). Lys298 contacts ATP.

It belongs to the class-I aminoacyl-tRNA synthetase family. MetG type 2B subfamily. In terms of assembly, monomer.

It localises to the cytoplasm. It carries out the reaction tRNA(Met) + L-methionine + ATP = L-methionyl-tRNA(Met) + AMP + diphosphate. Its function is as follows. Is required not only for elongation of protein synthesis but also for the initiation of all mRNA translation through initiator tRNA(fMet) aminoacylation. The sequence is that of Methionine--tRNA ligase (metG) from Rickettsia prowazekii (strain Madrid E).